A 318-amino-acid polypeptide reads, in one-letter code: V-set and immunoglobulin domain-containing protein 1 (318 aa).

The first 19 residues, 1–19, serve as a signal peptide directing secretion; the sequence is MSFLLFITLGLSLTALSHC. Residues 20-131 enclose the Ig-like V-type domain; sequence VQVTIQNPII…SSGQGKILLT (112 aa). The Extracellular segment spans residues 20-233; it reads VQVTIQNPII…TGGEGGVIAA (214 aa). 2 cysteine pairs are disulfide-bonded: Cys41–Cys114 and Cys157–Cys207. In terms of domain architecture, Ig-like C2-type spans 136-223; that stretch reads PSVPHCSIRG…GNATCELNLH (88 aa). The chain crosses the membrane as a helical span at residues 234–254; the sequence is AVIGGLLAAAIIIAIVWFLVV. The Cytoplasmic segment spans residues 255–318; it reads KRKQKKQLPP…ANGETEEPTA (64 aa). The tract at residues 261-318 is disordered; that stretch reads QLPPTKEMKTGGNQYMAVSGEANEPPKENLGASEPTETIQFHDHAENAANGETEEPTA.

Expressed in thymocytes.

Its subcellular location is the membrane. This Xenopus laevis (African clawed frog) protein is V-set and immunoglobulin domain-containing protein 1 (vsig1).